The following is a 1321-amino-acid chain: Bile salt export pump (1321 aa).

At 1–62 the chain is on the cytoplasmic side; it reads MSDSVILRSV…FSSWTDIWLM (62 aa). The ABC transmembrane type-1 1 domain maps to 62–385; it reads MCMGSLCACI…ASPCLEAFAA (324 aa). A helical transmembrane segment spans residues 63–83; the sequence is CMGSLCACIHGIAQPGVLLIF. At 84-147 the chain is on the extracellular side; sequence GTMTDVFIDY…MIRFAGYYAG (64 aa). N109, N116, N122, and N125 each carry an N-linked (GlcNAc...) asparagine glycan. Residues 148–168 traverse the membrane as a helical segment; sequence IGIAVLTTGYIQICFWGIAAA. The Cytoplasmic portion of the chain corresponds to 169–215; sequence HQIQKMRKSYFRKIMRMGIGWVDCNSVGKLNTPFSVDFNKINDSSAD. Residues 216–236 form a helical membrane-spanning segment; it reads QLAIFIQGMTSPIFGFLVGFS. Over 237–240 the chain is Extracellular; the sequence is QWWK. Residues 241-261 form a helical membrane-spanning segment; it reads LTLVIISVSPLIGLGAAIIGL. At 262–319 the chain is on the cytoplasmic side; it reads SVSKFTDYELKAYAKAGSVADEVISSMRTVAAFGGEKKEVERYEKNLVFAQRWGIRKG. The helical transmembrane segment at 320 to 340 threads the bilayer; that stretch reads IVMGFFTGYMWCLIFFCYALA. Residues 341 to 353 are Extracellular-facing; sequence FWYGSKLVLEEGE. The chain crosses the membrane as a helical span at residues 354–374; it reads YSPGALVQIFLSVIIGALNLG. Over 375–755 the chain is Cytoplasmic; sequence NASPCLEAFA…KLNAPEWPYM (381 aa). The 237-residue stretch at 420-656 folds into the ABC transporter 1 domain; the sequence is IEFHNVTFHY…KGVYFALVTL (237 aa). 455-462 lines the ATP pocket; sequence GPSGAGKS. Phosphothreonine is present on T586. A Phosphoserine modification is found at S587. Residues 651–672 are interaction with HAX1; the sequence is FALVTLQSQRNQGDQEENEKDA. Residues 659–735 are disordered; the sequence is QRNQGDQEEN…KDKDLPAQED (77 aa). The span at 664–677 shows a compositional bias: acidic residues; it reads DQEENEKDATEDDI. Residues S690, S701, and S704 each carry the phosphoserine modification. Over residues 714-731 the composition is skewed to basic and acidic residues; it reads VEDHKSTHEEDRKDKDLP. The ABC transmembrane type-1 2 domain maps to 755 to 1043; sequence MLLGSMGAAV…ASSYTPSYAK (289 aa). The chain crosses the membrane as a helical span at residues 756–776; sequence LLGSMGAAVNGAVTPLYAFLF. At 777–794 the chain is on the extracellular side; the sequence is SQILGTFSLPDKEEQRSQ. The helical transmembrane segment at 795-815 threads the bilayer; that stretch reads INGICLLFVTLGCVSFFTQFL. The Cytoplasmic segment spans residues 816–869; the sequence is QGYTFAKSGELLTKRLRKFGFRAMLGQDIGWFDDLRNSPGALTTRLATDASQVQ. 2 consecutive transmembrane segments (helical) span residues 870–890 and 891–911; these read GATGSQIGMMVNSFTNVTVAM and IIAFLFSWKLTLGIVCFFPFL. Residues 912–979 are Cytoplasmic-facing; it reads ALSGALQTKM…PYKMAIKKAN (68 aa). Residues 980–1000 traverse the membrane as a helical segment; the sequence is VYGLCFGFSQCITFIANSASY. The Extracellular segment spans residues 1001–1011; that stretch reads RYGGYLISNEG. A helical membrane pass occupies residues 1012 to 1032; it reads LHFSYVFRVISAVVLSATALG. The Cytoplasmic portion of the chain corresponds to 1033–1321; that stretch reads RASSYTPSYA…KLVTTGSPIS (289 aa). The 239-residue stretch at 1078 to 1316 folds into the ABC transporter 2 domain; it reads IDFVDCKFTY…KGAYYKLVTT (239 aa). Residue 1113-1120 participates in ATP binding; it reads GSSGCGKS. 2 positions are modified to phosphoserine: S1214 and S1321.

It belongs to the ABC transporter superfamily. ABCB family. Multidrug resistance exporter (TC 3.A.1.201) subfamily. As to quaternary structure, interacts with HAX1. Interacts with the adapter protein complex 2 (AP-2) throught AP2A2 or AP2A1; this interaction regulates cell membrane expression of ABCB11 through its internalization in a clathrin-dependent manner and its subsequent degradation. In terms of processing, N-glycosylated. Post-translationally, ubiquitinated; short-chain ubiquitination regulates cell-Surface expression of ABCB11. As to expression, expressed predominantly, if not exclusively in the liver, where it was further localized to the canalicular microvilli and to subcanalicular vesicles of the hepatocytes by in situ.

The protein localises to the apical cell membrane. The protein resides in the recycling endosome membrane. It localises to the endosome. It is found in the cell membrane. The catalysed reaction is cholate(in) + ATP + H2O = cholate(out) + ADP + phosphate + H(+). It catalyses the reaction taurocholate(in) + ATP + H2O = taurocholate(out) + ADP + phosphate + H(+). The enzyme catalyses glycocholate(in) + ATP + H2O = glycocholate(out) + ADP + phosphate + H(+). It carries out the reaction glycochenodeoxycholate(in) + ATP + H2O = glycochenodeoxycholate(out) + ADP + phosphate + H(+). The catalysed reaction is taurochenodeoxycholate(in) + ATP + H2O = taurochenodeoxycholate(out) + ADP + phosphate + H(+). It catalyses the reaction glycoursodeoxycholate(in) + ATP + H2O = glycoursodeoxycholate(out) + ADP + phosphate + H(+). The enzyme catalyses tauroursodeoxycholate(in) + ATP + H2O = tauroursodeoxycholate(out) + ADP + phosphate + H(+). It carries out the reaction taurodeoxycholate(in) + ATP + H2O = taurodeoxycholate(out) + ADP + phosphate + H(+). The catalysed reaction is taurolithocholate 3-sulfate(in) + ATP + H2O = taurolithocholate 3-sulfate(out) + ADP + phosphate + H(+). It catalyses the reaction pravastatin(in) + ATP + H2O = pravastatin(out) + ADP + phosphate + H(+). The uptake of taurocholate is inhibited by taurolithocholate sulfate with an IC(50) of 9 uM. Pravastatin competitively inhibits the transport of taurocholic acid. Cyclosporin A, glibenclamide, rifampicin and troglitazonestrongly competitively inhibit the transport activity of taurocholate. The canalicular transport activity of taurocholate is strongly dependent on canalicular membrane cholesterol content. The uptake of taurocholate is increased by short- and medium-chain fatty acids. Cholesterol increases transport capacity of taurocholate without affecting the affinity for the substrate. Catalyzes the transport of the major hydrophobic bile salts, such as taurine and glycine-conjugated cholic acid across the canalicular membrane of hepatocytes in an ATP-dependent manner, therefore participates in hepatic bile acid homeostasis and consequently to lipid homeostasis through regulation of biliary lipid secretion in a bile salts dependent manner. Transports taurine-conjugated bile salts more rapidly than glycine-conjugated bile salts. Also transports non-bile acid compounds, such as pravastatin and fexofenadine in an ATP-dependent manner and may be involved in their biliary excretion. This Oryctolagus cuniculus (Rabbit) protein is Bile salt export pump.